We begin with the raw amino-acid sequence, 325 residues long: Putative ankyrin repeat protein RF_0011 (325 aa).

3 ANK repeats span residues 63–94, 99–130, and 134–164; these read NGNTTLILAADAGLEEACLKLIPKMSDEAINM, RGQPALVKAMWRDLDSVCIELIPKMSKENINA, and CGRTLLMLAAKKGMTTVSKMFINLMPPEMII.

This chain is Putative ankyrin repeat protein RF_0011, found in Rickettsia felis (strain ATCC VR-1525 / URRWXCal2) (Rickettsia azadi).